A 300-amino-acid polypeptide reads, in one-letter code: MILLEVNNRIIEEILTLKFENAAAGNKPEVVEVTFADFDGVLYHVSNPNGDKAKVMISISLKFYKELQEHGADEVLKNVYGNFLVAPESGYNVSLLYDLEALPSNKDSVIHQAGMLKRNCFASVFEKYFKFQEEGKEGEKRAVIHYREDETMYVEAKKDRVTVVFSTVFKDDDDVVIGKVFMQEFKEGRRASHTAPQVLFSHREPPLELKDTDAAVGDNIGYITFVLFPRHTSANARDNTINLIHTFRDYLHYHIKCSKAYIHTRMRAKTSDFLKVLNRARPDAEKKEMKTITGKTFAAR.

The protein belongs to the ARPC2 family. In terms of assembly, component of the Arp2/3 complex composed of actr2/arp2, actr3/arp3, arpc1 (arpc1a or arpc1b), arpc2, arpc3, arpc4 and arpc5.

The protein resides in the cytoplasm. It is found in the cytoskeleton. Its subcellular location is the cell projection. It localises to the nucleus. In terms of biological role, actin-binding component of the Arp2/3 complex, a multiprotein complex that mediates actin polymerization upon stimulation by nucleation-promoting factor (NPF). The Arp2/3 complex mediates the formation of branched actin networks in the cytoplasm, providing the force for cell motility. In addition to its role in the cytoplasmic cytoskeleton, the Arp2/3 complex also promotes actin polymerization in the nucleus, thereby regulating gene transcription and repair of damaged DNA. The Arp2/3 complex promotes homologous recombination (HR) repair in response to DNA damage by promoting nuclear actin polymerization, leading to drive motility of double-strand breaks (DSBs). The sequence is that of Actin-related protein 2/3 complex subunit 2-B (arpc2-b) from Xenopus laevis (African clawed frog).